The following is a 562-amino-acid chain: Wee1-like protein kinase 2 (562 aa).

Disordered regions lie at residues 1–86 (MRTA…DKGV) and 161–181 (YRQA…DDCS). Over residues 35-48 (HSNQRGSPVNSWRA) the composition is skewed to polar residues. The 275-residue stretch at 217–491 (FLEIEKIGAG…AKNSLLRRCV (275 aa)) folds into the Protein kinase domain. ATP-binding positions include 223-231 (IGAGEFGSV) and lysine 246. Aspartate 344 acts as the Proton acceptor in catalysis. Mg(2+)-binding residues include asparagine 349 and aspartate 381. The stretch at 494–520 (AAQLQKQLNVEKFKTAMLERELKAAKL) forms a coiled coil.

Belongs to the protein kinase superfamily. Ser/Thr protein kinase family. WEE1 subfamily.

It localises to the nucleus. It catalyses the reaction L-tyrosyl-[protein] + ATP = O-phospho-L-tyrosyl-[protein] + ADP + H(+). Functionally, oocyte-specific protein tyrosine kinase that phosphorylates and inhibits cdk1 and acts as a regulator of meiosis. Required to maintain meiotic arrest in oocytes by phosphorylating cdk1 at 'Tyr-15', leading to inhibit cdk1 activity and prevent meiotic reentry. The chain is Wee1-like protein kinase 2 (wee2) from Xenopus tropicalis (Western clawed frog).